The chain runs to 626 residues: MGPEAWVRPLKTAPKPGEAIRLILFIYLSCFFLPVMSSEPSYSFLLTSFTTGRVFANTTWRAGTSKEVSFAVDLCVLFPEPARTHEEQHNLPVIGAGSVDLAAGFGHSGSQTGCGSSKGAEKGLQNVDFYLCPGNHPDASCRDTYQFFCPDWTCVTLATYSGGSTRSSTLSISRVPHPKLCTRKNCNPLTITVHDPNAAQWYYGMSWGLRLYIPGFDVGTMFTIQKKILVSWSSPKPIGPLTDLGDPIFQKHPDKVDLTVPLPFLVPRPQLQQQHLQPSLMSILGGVHHLLNLTQPKLAQDCWLCLKAKPPYYVGLGVEATLKRGPLSCHTRPRALTIGDVSGNASCLISTGYNLSASPFQATCNQSLLTSISTSVSYQAPNNTWLACTSGLTRCINGTEPGPLLCVLVHVLPQVYVYSGPEGRQLIAPPELHPRLHQAVPLLVPLLAGLSIAGSAAIGTAALVQGETGLISLSQQVDADFSNLQSAIDILHSQVESLAEVVLQNCRCLDLLFLSQGGLCAALGESCCFYANQSGVIKGTVKKVRENLDRHQQERENNIPWYQSMFNWNPWLTTLITGLAGPLLILLLSLIFGPCILNSFLNFIKQRIASVKLTYLKTQYDTLVNN.

The N-terminal stretch at 1–38 is a signal peptide; the sequence is MGPEAWVRPLKTAPKPGEAIRLILFIYLSCFFLPVMSS. The segment at 39-438 is surface protein; that stretch reads EPSYSFLLTS…PPELHPRLHQ (400 aa). Residues 39–575 lie on the Extracellular side of the membrane; the sequence is EPSYSFLLTS…FNWNPWLTTL (537 aa). A CXXC motif is present at residues 302–305; that stretch reads CWLC. A fusion peptide region spans residues 439 to 459; sequence AVPLLVPLLAGLSIAGSAAIG. Residues 439–626 are transmembrane protein; it reads AVPLLVPLLA…KTQYDTLVNN (188 aa). The CKS-17 signature appears at 503–519; that stretch reads LQNCRCLDLLFLSQGGL. Residues Cys-520 and Cys-527 are joined by a disulfide bond. The CX6CC motif lies at 520 to 528; sequence CAALGESCC. A helical membrane pass occupies residues 576-596; sequence ITGLAGPLLILLLSLIFGPCI. The Cytoplasmic segment spans residues 597–626; sequence LNSFLNFIKQRIASVKLTYLKTQYDTLVNN.

Belongs to the gamma type-C retroviral envelope protein family. HERV class-I T env subfamily. The CXXC motif is highly conserved across a broad range of retroviral envelope proteins. It is thought to participate in the formation of a labile disulfide bond possibly with the CX6CC motif present in the transmembrane domain. In terms of tissue distribution, expressed at higher level in thyroid. Expressed at lower level in adrenal, bone marrow, brain, breast, kidney, ovary, placenta, prostate, skin, testis and trachea.

It is found in the cell membrane. Retroviral envelope proteins mediate receptor recognition and membrane fusion during early infection. Endogenous envelope proteins may have kept, lost or modified their original function during evolution. This endogenous envelope protein has lost its original fusogenic properties. The protein is Endogenous retrovirus group S71 member 1 Env polyprotein (ERVS71-1) of Homo sapiens (Human).